The chain runs to 370 residues: Putative agmatine deiminase (370 aa).

Residue Cys-361 is the Amidino-cysteine intermediate of the active site.

It belongs to the agmatine deiminase family.

It carries out the reaction agmatine + H2O = N-carbamoylputrescine + NH4(+). In Shewanella baltica (strain OS223), this protein is Putative agmatine deiminase.